A 259-amino-acid chain; its full sequence is Phosphoadenosine 5'-phosphosulfate reductase (259 aa).

Residue Cys-244 is the Nucleophile; cysteine thiosulfonate intermediate of the active site.

Belongs to the PAPS reductase family. CysH subfamily.

Its subcellular location is the cytoplasm. It catalyses the reaction [thioredoxin]-disulfide + sulfite + adenosine 3',5'-bisphosphate + 2 H(+) = [thioredoxin]-dithiol + 3'-phosphoadenylyl sulfate. Its pathway is sulfur metabolism; hydrogen sulfide biosynthesis; sulfite from sulfate: step 3/3. Functionally, catalyzes the formation of sulfite from phosphoadenosine 5'-phosphosulfate (PAPS) using thioredoxin as an electron donor. The chain is Phosphoadenosine 5'-phosphosulfate reductase from Vibrio campbellii (strain ATCC BAA-1116).